A 154-amino-acid polypeptide reads, in one-letter code: Aspartate carbamoyltransferase regulatory chain (154 aa).

Zn(2+)-binding residues include C109, C114, C138, and C141.

Belongs to the PyrI family. As to quaternary structure, contains catalytic and regulatory chains. The cofactor is Zn(2+).

Functionally, involved in allosteric regulation of aspartate carbamoyltransferase. The sequence is that of Aspartate carbamoyltransferase regulatory chain from Aliivibrio salmonicida (strain LFI1238) (Vibrio salmonicida (strain LFI1238)).